The primary structure comprises 189 residues: MVKLIVGLGNPGEKYIETKHNVGFMLVDKICKDLDLKFTADKIFQADIASTFLNGEKVYFVKPTTFMNESGKAVQALLAYYGLDIEDLLVIYDDLDMEVGKIRLRSKGSAGGHNGIKSIIKHIGSQEFKRIKIGIGRPKEGVTVVHHVLGKFDKDDYTTILNTLDKVDNAVNYYLQSGNFEQTMQKYNG.

Tyr15 provides a ligand contact to tRNA. His20 acts as the Proton acceptor in catalysis. Residues Phe66, Asn68, and Asn114 each contribute to the tRNA site.

Belongs to the PTH family. As to quaternary structure, monomer.

The protein localises to the cytoplasm. The enzyme catalyses an N-acyl-L-alpha-aminoacyl-tRNA + H2O = an N-acyl-L-amino acid + a tRNA + H(+). In terms of biological role, hydrolyzes ribosome-free peptidyl-tRNAs (with 1 or more amino acids incorporated), which drop off the ribosome during protein synthesis, or as a result of ribosome stalling. Functionally, catalyzes the release of premature peptidyl moieties from peptidyl-tRNA molecules trapped in stalled 50S ribosomal subunits, and thus maintains levels of free tRNAs and 50S ribosomes. The protein is Peptidyl-tRNA hydrolase of Streptococcus sanguinis (strain SK36).